Reading from the N-terminus, the 523-residue chain is NAD(P)H-quinone oxidoreductase subunit 2 (523 aa).

The next 13 helical transmembrane spans lie at 29 to 49, 57 to 77, 94 to 114, 128 to 148, 182 to 202, 223 to 243, 255 to 275, 291 to 311, 317 to 337, 345 to 365, 389 to 409, 424 to 444, and 477 to 497; these read AVAP…VDLA, WVPP…ALQW, LAIA…MISW, AGIL…TDLV, LLVG…LYGL, AALA…AVPF, PTPV…ALAL, LLFT…ALAQ, MLAY…VCGT, VLYT…IILF, LGLS…GFFG, VLVV…IGVI, and VALV…NPLF.

The protein belongs to the complex I subunit 2 family. NDH-1 can be composed of about 15 different subunits; different subcomplexes with different compositions have been identified which probably have different functions.

The protein resides in the cellular thylakoid membrane. The enzyme catalyses a plastoquinone + NADH + (n+1) H(+)(in) = a plastoquinol + NAD(+) + n H(+)(out). It catalyses the reaction a plastoquinone + NADPH + (n+1) H(+)(in) = a plastoquinol + NADP(+) + n H(+)(out). NDH-1 shuttles electrons from an unknown electron donor, via FMN and iron-sulfur (Fe-S) centers, to quinones in the respiratory and/or the photosynthetic chain. The immediate electron acceptor for the enzyme in this species is believed to be plastoquinone. Couples the redox reaction to proton translocation, and thus conserves the redox energy in a proton gradient. Cyanobacterial NDH-1 also plays a role in inorganic carbon-concentration. The protein is NAD(P)H-quinone oxidoreductase subunit 2 of Synechococcus sp. (strain WH7803).